Reading from the N-terminus, the 37-residue chain is Large ribosomal subunit protein bL36 (37 aa).

It belongs to the bacterial ribosomal protein bL36 family.

In Alkaliphilus oremlandii (strain OhILAs) (Clostridium oremlandii (strain OhILAs)), this protein is Large ribosomal subunit protein bL36.